Here is a 176-residue protein sequence, read N- to C-terminus: Tubulin polymerization-promoting protein family member 3 (176 aa).

Alanine 2 is modified (N-acetylalanine).

Belongs to the TPPP family.

The protein resides in the cytoplasm. It localises to the cytoskeleton. In terms of biological role, regulator of microtubule dynamic that has microtubule bundling activity. Required for embryo implantation; possibly by regulating beta-catenin. Also required for decidualization via regulation of beta-catenin. This chain is Tubulin polymerization-promoting protein family member 3 (Tppp3), found in Rattus norvegicus (Rat).